Here is a 59-residue protein sequence, read N- to C-terminus: Potassium channel toxin alpha-KTx 4.5 (59 aa).

An N-terminal signal peptide occupies residues 1–22 (MKAFYGVLIIFILISMLDLSQQ). 3 disulfide bridges follow: C29–C50, C35–C55, and C39–C57. An interaction with Ca(2+)-activated K(+) channels region spans residues 48–55 (GKCMNGKC).

Expressed by the venom gland.

Its subcellular location is the secreted. In terms of biological role, inhibits with low potency Kv1.1/KCNA1, Kv1.2/KCNA2, Kv1.3/KCNA3 and Kv11.1/KCNH2/ERG1 voltage-gated potassium channels. The polypeptide is Potassium channel toxin alpha-KTx 4.5 (Tityus costatus (Brazilian scorpion)).